A 913-amino-acid chain; its full sequence is Eukaryotic translation initiation factor 3 subunit C (913 aa).

The tract at residues 1-44 (MSRFFTTGSDSESESSLSGEELVTKPVGGNYGKQPLLLSEDEED) is disordered. Over residues 8–21 (GSDSESESSLSGEE) the composition is skewed to low complexity. 7 positions are modified to phosphoserine: Ser-9, Ser-11, Ser-13, Ser-15, Ser-16, Ser-18, and Ser-39. Position 99 is an N6-acetyllysine (Lys-99). 2 disordered regions span residues 157–301 (TSYK…GGEW) and 522–542 (QLTP…NEGE). Phosphoserine is present on residues Ser-166, Ser-178, Ser-181, and Ser-182. Residues 166–190 (SADEDAEKNEEDSEGSSDEDEDEDG) are compositionally biased toward acidic residues. The span at 199–216 (KKSEAPSGESRKFLKKMD) shows a compositional bias: basic and acidic residues. Acidic residues predominate over residues 217 to 232 (DEDEDSEDSEDDEDWD). The span at 261–278 (PTTDEDKKAAEKKREDKA) shows a compositional bias: basic and acidic residues. Residues 522–531 (QLTPPEGSSK) show a composition bias toward polar residues. Position 524 is a phosphothreonine (Thr-524). Lys-643 bears the N6-acetyllysine mark. The 177-residue stretch at 673–849 (FHLHINLELL…QTVVMHRTEP (177 aa)) folds into the PCI domain. A disordered region spans residues 885–913 (FRDQKDGYRKNEGYMRRGGYRQQQSQTAY). A compositionally biased stretch (basic and acidic residues) spans 886-899 (RDQKDGYRKNEGYM). Ser-909 is subject to Phosphoserine.

Component of the eukaryotic translation initiation factor 3 (eIF-3) complex, which is composed of 13 subunits: EIF3A, EIF3B, EIF3C, EIF3D, EIF3E, EIF3F, EIF3G, EIF3H, EIF3I, EIF3J, EIF3K, EIF3L and EIF3M. The eIF-3 complex appears to include 3 stable modules: module A is composed of EIF3A, EIF3B, EIF3G and EIF3I; module B is composed of EIF3F, EIF3H, and EIF3M; and module C is composed of EIF3C, EIF3D, EIF3E, EIF3K and EIF3L. EIF3C of module C binds EIF3B of module A and EIF3H of module B, thereby linking the three modules. EIF3J is a labile subunit that binds to the eIF-3 complex via EIF3B. The eIF-3 complex interacts with RPS6KB1 under conditions of nutrient depletion. Mitogenic stimulation leads to binding and activation of a complex composed of MTOR and RPTOR, leading to phosphorylation and release of RPS6KB1 and binding of EIF4B to eIF-3. Identified in a HCV IRES-mediated translation complex, at least composed of EIF3C, IGF2BP1, RPS3 and HCV RNA-replicon. Interacts with ALKBH4, IFIT1 and IFIT2. Interacts with BZW2/5MP1. In terms of processing, phosphorylated. Phosphorylation is enhanced upon serum stimulation.

It localises to the cytoplasm. Functionally, component of the eukaryotic translation initiation factor 3 (eIF-3) complex, which is required for several steps in the initiation of protein synthesis. The eIF-3 complex associates with the 40S ribosome and facilitates the recruitment of eIF-1, eIF-1A, eIF-2:GTP:methionyl-tRNAi and eIF-5 to form the 43S pre-initiation complex (43S PIC). The eIF-3 complex stimulates mRNA recruitment to the 43S PIC and scanning of the mRNA for AUG recognition. The eIF-3 complex is also required for disassembly and recycling of post-termination ribosomal complexes and subsequently prevents premature joining of the 40S and 60S ribosomal subunits prior to initiation. The eIF-3 complex specifically targets and initiates translation of a subset of mRNAs involved in cell proliferation, including cell cycling, differentiation and apoptosis, and uses different modes of RNA stem-loop binding to exert either translational activation or repression. The protein is Eukaryotic translation initiation factor 3 subunit C of Homo sapiens (Human).